A 481-amino-acid chain; its full sequence is Ribosomal RNA small subunit methyltransferase F (481 aa).

Residues 119–125 (ASAPGSK), glutamate 143, aspartate 170, and aspartate 188 contribute to the S-adenosyl-L-methionine site. Cysteine 241 functions as the Nucleophile in the catalytic mechanism.

This sequence belongs to the class I-like SAM-binding methyltransferase superfamily. RsmB/NOP family.

The protein resides in the cytoplasm. The catalysed reaction is cytidine(1407) in 16S rRNA + S-adenosyl-L-methionine = 5-methylcytidine(1407) in 16S rRNA + S-adenosyl-L-homocysteine + H(+). Functionally, specifically methylates the cytosine at position 1407 (m5C1407) of 16S rRNA. The sequence is that of Ribosomal RNA small subunit methyltransferase F from Shewanella sp. (strain MR-4).